The following is a 466-amino-acid chain: Asparagine--tRNA ligase (466 aa).

This sequence belongs to the class-II aminoacyl-tRNA synthetase family. As to quaternary structure, homodimer.

It localises to the cytoplasm. It carries out the reaction tRNA(Asn) + L-asparagine + ATP = L-asparaginyl-tRNA(Asn) + AMP + diphosphate + H(+). This Wigglesworthia glossinidia brevipalpis protein is Asparagine--tRNA ligase.